Consider the following 715-residue polypeptide: MIYEGKAITVKALESGIVELKFDLKGESVNKFNRLTLNELRQAVDAIRADASVKGVIVRSGKDVFIVGADITEFVDNFKLPEAELVAGNLEANRIFNAFEDLEVPTVAAINGIALGGGLEMCLAADYRVMSTSARIGLPEVKLGIYPGFGGTVRLPRLIGSDNAIEWIAAGKENRAEDALKVGAVDAVVAPELLLAGALDLIKRAISGELDYKAKRQPKLEKLKLNAIEQMMAFETAKGFVAGQAGPNYPAPVEAIKSIQKAANFGRDKALEVEAAGFAKLAKTSVAESLIGLFLNDQELKRKAKAHDEIAHDVKQAAVLGAGIMGGGIAYQSAVKGTPILMKDIREEAIQLGLNEASKLLGNRVEKGRLTPAKMAEALNAIRPTLSYGDFANVDIVVEAVVENPKVKQAVLAEVEGQVKDDAILASNTSTISINLLAKALKRPENFVGMHFFNPVHMMPLVEVIRGEKSSDVAVATTVAYAKKMGKNPIVVNDCPGFLVNRVLFPYFGGFAKLVSAGVDFVRIDKVMEKFGWPMGPAYLMDVVGIDTGHHGRDVMAEGFPDRMKDERRSAVDALYEANRLGQKNGKGFYAYETDKRGKPKKVFDATVLDVLKPIVFEQREVTDEDIINWMMVPLCLETVRCLEDGIVETAAEADMGLVYGIGFPPFRGGALRYIDSIGVAEFVALADQYADLGPLYHPTAKLREMAKNGQRFFN.

Residues 1 to 190 (MIYEGKAITV…KVGAVDAVVA (190 aa)) form an enoyl-CoA hydratase/isomerase region. Asp-297 lines the substrate pocket. A 3-hydroxyacyl-CoA dehydrogenase region spans residues 312–715 (HDVKQAAVLG…MAKNGQRFFN (404 aa)). Residues Met-325, Asp-344, 401 to 403 (VVE), Lys-408, and Ser-430 each bind NAD(+). His-451 acts as the For 3-hydroxyacyl-CoA dehydrogenase activity in catalysis. An NAD(+)-binding site is contributed by Asn-454. Substrate contacts are provided by Asn-501 and Tyr-660.

In the N-terminal section; belongs to the enoyl-CoA hydratase/isomerase family. This sequence in the C-terminal section; belongs to the 3-hydroxyacyl-CoA dehydrogenase family. In terms of assembly, heterotetramer of two alpha chains (FadB) and two beta chains (FadA).

The catalysed reaction is a (3S)-3-hydroxyacyl-CoA + NAD(+) = a 3-oxoacyl-CoA + NADH + H(+). It catalyses the reaction a (3S)-3-hydroxyacyl-CoA = a (2E)-enoyl-CoA + H2O. It carries out the reaction a 4-saturated-(3S)-3-hydroxyacyl-CoA = a (3E)-enoyl-CoA + H2O. The enzyme catalyses (3S)-3-hydroxybutanoyl-CoA = (3R)-3-hydroxybutanoyl-CoA. The catalysed reaction is a (3Z)-enoyl-CoA = a 4-saturated (2E)-enoyl-CoA. It catalyses the reaction a (3E)-enoyl-CoA = a 4-saturated (2E)-enoyl-CoA. The protein operates within lipid metabolism; fatty acid beta-oxidation. Functionally, involved in the aerobic and anaerobic degradation of long-chain fatty acids via beta-oxidation cycle. Catalyzes the formation of 3-oxoacyl-CoA from enoyl-CoA via L-3-hydroxyacyl-CoA. It can also use D-3-hydroxyacyl-CoA and cis-3-enoyl-CoA as substrate. This chain is Fatty acid oxidation complex subunit alpha, found in Pseudomonas putida (strain ATCC 47054 / DSM 6125 / CFBP 8728 / NCIMB 11950 / KT2440).